An 882-amino-acid polypeptide reads, in one-letter code: Protein O-mannosyl-transferase TMTC1 (882 aa).

The Cytoplasmic segment spans residues 1-20 (MVVTTSARGGGGDRTPSRRR). The tract at residues 1–20 (MVVTTSARGGGGDRTPSRRR) is disordered. The chain crosses the membrane as a helical span at residues 21-41 (GCGLAPAGAAALLAGASCLCY). Topologically, residues 42 to 110 (GRSLQGEFVH…KLNIFLTGMN (69 aa)) are extracellular. Asn86 carries N-linked (GlcNAc...) asparagine glycosylation. Residues 111-131 (PFYFHAVNIILHCLVTLVLMY) traverse the membrane as a helical segment. The Cytoplasmic segment spans residues 132–137 (TCDKTV). A helical transmembrane segment spans residues 138 to 157 (FKNRGLAFVTALLFAVHPIH). Residues 158-160 (TEA) are Extracellular-facing. Residues 161–181 (VAGIVGRADVLACLLFLLAFL) traverse the membrane as a helical segment. The Cytoplasmic portion of the chain corresponds to 182–197 (SYNRSLDQGCVGGSFP). A helical transmembrane segment spans residues 198-218 (STVSPFFLLLSLFLGTCAMLV). The Extracellular portion of the chain corresponds to 219–221 (KET). The helical transmembrane segment at 222 to 238 (GITVFGVCLVYDLFSLS) threads the bilayer. The Cytoplasmic segment spans residues 239-313 (NKQDKSSNGA…SPRAVWSMMR (75 aa)). The disordered stretch occupies residues 246-277 (NGALCPRSPQQPGSPQPSSLPGHPHRENGKQQ). Residues 251–267 (PRSPQQPGSPQPSSLPG) show a composition bias toward low complexity. The chain crosses the membrane as a helical span at residues 314 to 334 (FLTYSYLLAFNVWLLLAPVTL). Over 335 to 354 (CYDWQVGSIPLVETIWDMRN) the chain is Extracellular. Residues 355-375 (LATIFLAVVMALLSLHCLAAF) traverse the membrane as a helical segment. At 376 to 381 (KRLEHK) the chain is on the cytoplasmic side. Residues 382-402 (EVLVGLLFLVFPFIPASNLFF) traverse the membrane as a helical segment. A topological domain (extracellular) is located at residue Arg403. The helical transmembrane segment at 404–424 (VGFVVAERVLYMPSMGYCILF) threads the bilayer. The Cytoplasmic portion of the chain corresponds to 425 to 438 (VHGLSKLCTWLNRC). Residues 439-459 (GATTLIVSTVLLLLLFSWKTV) traverse the membrane as a helical segment. The Extracellular portion of the chain corresponds to 460–882 (KQNEIWLSRE…LQEVREKDQT (423 aa)). TPR repeat units lie at residues 483 to 516 (AKVH…YPRH), 517 to 547 (ASAL…HPQH), 548 to 581 (NRAL…GPEF), 582 to 615 (ADAY…CPDS), 616 to 649 (SDLH…SPSH), 650 to 682 (HVAM…VAHK), 683 to 716 (AEIL…QPSQ), 751 to 784 (LECY…KPKD), 789 to 822 (SELF…NPDQ), and 823 to 856 (AQAW…VPDS).

It belongs to the TMTC family. May interact with FAM168B.

It is found in the membrane. The protein localises to the endoplasmic reticulum. It carries out the reaction a di-trans,poly-cis-dolichyl beta-D-mannosyl phosphate + L-seryl-[protein] = 3-O-(alpha-D-mannosyl)-L-seryl-[protein] + a di-trans,poly-cis-dolichyl phosphate + H(+). The enzyme catalyses a di-trans,poly-cis-dolichyl beta-D-mannosyl phosphate + L-threonyl-[protein] = 3-O-(alpha-D-mannosyl)-L-threonyl-[protein] + a di-trans,poly-cis-dolichyl phosphate + H(+). It functions in the pathway protein modification; protein glycosylation. Transfers mannosyl residues to the hydroxyl group of serine or threonine residues. The 4 members of the TMTC family are O-mannosyl-transferases dedicated primarily to the cadherin superfamily, each member seems to have a distinct role in decorating the cadherin domains with O-linked mannose glycans at specific regions. Also acts as O-mannosyl-transferase on other proteins such as PDIA3. This Homo sapiens (Human) protein is Protein O-mannosyl-transferase TMTC1.